The primary structure comprises 416 residues: Probable pectate lyase 8 (416 aa).

Positions 1-24 (MAVTKLILFASALLLTALFIGVNA) are cleaved as a signal peptide. 3 N-linked (GlcNAc...) asparagine glycosylation sites follow: Asn23, Asn28, and Asn52. Residues Asp214, Asp238, and Asp242 each contribute to the Ca(2+) site. Arg294 is a catalytic residue.

It belongs to the polysaccharide lyase 1 family. Ca(2+) serves as cofactor.

It carries out the reaction Eliminative cleavage of (1-&gt;4)-alpha-D-galacturonan to give oligosaccharides with 4-deoxy-alpha-D-galact-4-enuronosyl groups at their non-reducing ends.. Its pathway is glycan metabolism; pectin degradation; 2-dehydro-3-deoxy-D-gluconate from pectin: step 2/5. This Arabidopsis thaliana (Mouse-ear cress) protein is Probable pectate lyase 8.